Consider the following 201-residue polypeptide: Imidazoleglycerol-phosphate dehydratase (201 aa).

Belongs to the imidazoleglycerol-phosphate dehydratase family.

It is found in the cytoplasm. It carries out the reaction D-erythro-1-(imidazol-4-yl)glycerol 3-phosphate = 3-(imidazol-4-yl)-2-oxopropyl phosphate + H2O. It participates in amino-acid biosynthesis; L-histidine biosynthesis; L-histidine from 5-phospho-alpha-D-ribose 1-diphosphate: step 6/9. This chain is Imidazoleglycerol-phosphate dehydratase, found in Synechococcus sp. (strain CC9902).